Consider the following 502-residue polypeptide: ATP synthase subunit alpha, chloroplastic (502 aa).

170 to 177 (GDRQTGKS) serves as a coordination point for ATP.

The protein belongs to the ATPase alpha/beta chains family. In terms of assembly, F-type ATPases have 2 components, CF(1) - the catalytic core - and CF(0) - the membrane proton channel. CF(1) has five subunits: alpha(3), beta(3), gamma(1), delta(1), epsilon(1). CF(0) has four main subunits: a, b, b' and c.

Its subcellular location is the plastid. The protein localises to the chloroplast thylakoid membrane. The catalysed reaction is ATP + H2O + 4 H(+)(in) = ADP + phosphate + 5 H(+)(out). In terms of biological role, produces ATP from ADP in the presence of a proton gradient across the membrane. The alpha chain is a regulatory subunit. In Guillardia theta (Cryptophyte), this protein is ATP synthase subunit alpha, chloroplastic.